Reading from the N-terminus, the 360-residue chain is mRNA cap guanine-N(7) methyltransferase (360 aa).

The disordered stretch occupies residues 1-62 (MSSSNSRVHE…NRHENNGNAQ (62 aa)). The span at 7-19 (RVHEEQPPTENRR) shows a compositional bias: basic and acidic residues. In terms of domain architecture, mRNA cap 0 methyltransferase spans 83-358 (SPIIQLKRFN…FYLAFAFEKR (276 aa)). MRNA is bound at residue 92–93 (NN). Residues Lys96, Gly118, Asp140, Asp168, Gln191, and Tyr196 each contribute to the S-adenosyl-L-methionine site.

Belongs to the class I-like SAM-binding methyltransferase superfamily. mRNA cap 0 methyltransferase family. As to quaternary structure, interacts with cdk9.

It localises to the nucleus. The catalysed reaction is a 5'-end (5'-triphosphoguanosine)-ribonucleoside in mRNA + S-adenosyl-L-methionine = a 5'-end (N(7)-methyl 5'-triphosphoguanosine)-ribonucleoside in mRNA + S-adenosyl-L-homocysteine. In terms of biological role, responsible for methylating the 5'-cap structure of mRNAs. This is mRNA cap guanine-N(7) methyltransferase (pcm1) from Schizosaccharomyces pombe (strain 972 / ATCC 24843) (Fission yeast).